We begin with the raw amino-acid sequence, 253 residues long: L-cysteine S-thiosulfotransferase subunit SoxA (253 aa).

The first 17 residues, 1–17 (MGKWVTIIFVLFLYAIA), serve as a signal peptide directing secretion. One can recognise a Cytochrome c domain in the interval 44–129 (VYAEQGRDMF…SIATYVATLS (86 aa)). Heme c-binding residues include cysteine 64, cysteine 67, histidine 68, cysteine 102, cysteine 165, cysteine 168, and histidine 169. Arginine 210 contributes to the substrate binding site. Residue cysteine 214 participates in heme c binding. Cysteine 214 serves as the catalytic Cysteine persulfide intermediate.

Belongs to the SoxA family. As to quaternary structure, heterodimer of SoxA and SoxX. Heme c is required as a cofactor. Cysteine persulfide at Cys-214.

It is found in the periplasm. It carries out the reaction L-cysteinyl-[SoxY protein] + thiosulfate + 2 Fe(III)-[cytochrome c] = S-sulfosulfanyl-L-cysteinyl-[SoxY protein] + 2 Fe(II)-[cytochrome c] + 2 H(+). The catalysed reaction is S-sulfanyl-L-cysteinyl-[SoxY protein] + thiosulfate + 2 Fe(III)-[cytochrome c] = S-(2-sulfodisulfanyl)-L-cysteinyl-[SoxY protein] + 2 Fe(II)-[cytochrome c] + 2 H(+). Functionally, C-type diheme cytochrome, which is part of the SoxAX cytochrome complex involved in sulfur oxidation. The SoxAX complex catalyzes the formation of a heterodisulfide bond between the conserved cysteine residue on a sulfur carrier SoxYZ complex subunit SoxY and thiosulfate or other inorganic sulfur substrates. This leads to the liberation of two electrons, which may be transferred from the SoxAX complex to another cytochrome c that then channels them into the respiratory electron transport chain. Some electrons may be used for reductive CO(2) fixation. The sequence is that of L-cysteine S-thiosulfotransferase subunit SoxA from Hydrogenobacter thermophilus (strain DSM 6534 / IAM 12695 / TK-6).